The chain runs to 229 residues: Phosphoglycolate phosphatase (229 aa).

The Nucleophile role is filled by Asp18. Positions 18, 20, and 176 each coordinate Mg(2+).

This sequence belongs to the HAD-like hydrolase superfamily. CbbY/CbbZ/Gph/YieH family. The cofactor is Mg(2+).

The enzyme catalyses 2-phosphoglycolate + H2O = glycolate + phosphate. It functions in the pathway organic acid metabolism; glycolate biosynthesis; glycolate from 2-phosphoglycolate: step 1/1. Specifically catalyzes the dephosphorylation of 2-phosphoglycolate. Is involved in the dissimilation of the intracellular 2-phosphoglycolate formed during the DNA repair of 3'-phosphoglycolate ends, a major class of DNA lesions induced by oxidative stress. The sequence is that of Phosphoglycolate phosphatase from Xylella fastidiosa (strain 9a5c).